Here is a 581-residue protein sequence, read N- to C-terminus: Major facilitator superfamily multidrug transporter NAG4 (581 aa).

Polar residues predominate over residues 1–14; that stretch reads MSHATDSTLDNASV. The segment at 1–43 is disordered; that stretch reads MSHATDSTLDNASVDSEKVRDFGDDLQNHPVQPTRSILSKIRS. An N-linked (GlcNAc...) asparagine glycan is attached at Asn-11. The span at 15-27 shows a compositional bias: basic and acidic residues; the sequence is DSEKVRDFGDDLQ. Asn-125 carries an N-linked (GlcNAc...) asparagine glycan. 12 helical membrane passes run 132–152, 169–189, 199–219, 230–250, 261–281, 290–310, 365–385, 403–423, 447–467, 471–491, 510–530, and 544–564; these read WLYT…SAIV, VIIL…PLVF, KPIY…CGAA, LIDG…LADI, AIFS…GGLL, WIYW…IAIV, IVFL…MFFF, GVMF…APFF, LIPM…FAWS, WVSW…FCCL, ALAA…LFTI, and LMAF…FFGA.

The protein belongs to the major facilitator superfamily. DHA1 family. Polyamines/proton antiporter (TC 2.A.1.2.16) subfamily.

The protein resides in the cell membrane. Its function is as follows. MFS transporter involved in N-acetylglucosamine (GlcNAc) uptake. Confers resistance to cycloheximide, 4-nitroquinoline-N-oxide, and 1,10-phenanthroline, and contributes to virulence. This chain is Major facilitator superfamily multidrug transporter NAG4, found in Candida albicans (strain SC5314 / ATCC MYA-2876) (Yeast).